The sequence spans 366 residues: Ribosomal RNA large subunit methyltransferase M (366 aa).

Residues Ser-188, 221–224, Asp-240, Asp-260, and Asp-277 each bind S-adenosyl-L-methionine; that span reads CPGG. Lys-306 acts as the Proton acceptor in catalysis.

Belongs to the class I-like SAM-binding methyltransferase superfamily. RNA methyltransferase RlmE family. RlmM subfamily. As to quaternary structure, monomer.

The protein localises to the cytoplasm. It carries out the reaction cytidine(2498) in 23S rRNA + S-adenosyl-L-methionine = 2'-O-methylcytidine(2498) in 23S rRNA + S-adenosyl-L-homocysteine + H(+). Its function is as follows. Catalyzes the 2'-O-methylation at nucleotide C2498 in 23S rRNA. The polypeptide is Ribosomal RNA large subunit methyltransferase M (Shigella sonnei (strain Ss046)).